A 93-amino-acid polypeptide reads, in one-letter code: Small ribosomal subunit protein uS19 (93 aa).

This sequence belongs to the universal ribosomal protein uS19 family.

Protein S19 forms a complex with S13 that binds strongly to the 16S ribosomal RNA. The sequence is that of Small ribosomal subunit protein uS19 from Leptospira interrogans serogroup Icterohaemorrhagiae serovar copenhageni (strain Fiocruz L1-130).